Consider the following 402-residue polypeptide: NADH-quinone oxidoreductase subunit D 2 (402 aa).

It belongs to the complex I 49 kDa subunit family. NDH-1 is composed of 14 different subunits. Subunits NuoB, C, D, E, F, and G constitute the peripheral sector of the complex.

Its subcellular location is the cell inner membrane. It carries out the reaction a quinone + NADH + 5 H(+)(in) = a quinol + NAD(+) + 4 H(+)(out). NDH-1 shuttles electrons from NADH, via FMN and iron-sulfur (Fe-S) centers, to quinones in the respiratory chain. The immediate electron acceptor for the enzyme in this species is believed to be ubiquinone. Couples the redox reaction to proton translocation (for every two electrons transferred, four hydrogen ions are translocated across the cytoplasmic membrane), and thus conserves the redox energy in a proton gradient. The chain is NADH-quinone oxidoreductase subunit D 2 from Nitrobacter hamburgensis (strain DSM 10229 / NCIMB 13809 / X14).